An 85-amino-acid chain; its full sequence is Small ribosomal subunit protein bS20 (85 aa).

It belongs to the bacterial ribosomal protein bS20 family.

Binds directly to 16S ribosomal RNA. The protein is Small ribosomal subunit protein bS20 of Cytophaga hutchinsonii (strain ATCC 33406 / DSM 1761 / CIP 103989 / NBRC 15051 / NCIMB 9469 / D465).